Here is a 467-residue protein sequence, read N- to C-terminus: Zinc finger protein 410 (467 aa).

Disordered regions lie at residues 84-111 and 187-214; these read PDGEETRAQTVQKSPEFLSTPESPSLLQ and NAKTSSNGENVHLGSGDGQPKDSGPLPQ. C2H2-type zinc fingers lie at residues 219-243, 249-273, 279-303, 309-333, and 339-362; these read LKCTVEGCDRTFVWPAHFKYHLKTH, FICPAAGCGKSFYVLQRLKVHMRTH, FVCPESNCGKQFTTAGNLKNHLRIH, FLCEAQGCGRSFAEYSSLRKHLVVH, and HQCQVCGKTFSQSGSRNVHMRKHH. Zn(2+)-binding residues include cysteine 221, cysteine 226, histidine 239, histidine 243, cysteine 251, cysteine 256, histidine 269, histidine 273, cysteine 281, cysteine 286, histidine 299, histidine 303, cysteine 311, cysteine 316, histidine 329, histidine 333, cysteine 341, cysteine 344, histidine 357, and histidine 361.

In terms of assembly, interacts with CDKN2A/p14ARF. In terms of processing, O-glycosylated. O-GlcNAcylation may occur in response to increasing glucose levels and affect transcription factor activity. Post-translationally, sumoylated. Sumoylation increases its half-life, possibly by blocking ubiquitin-mediated degradation.

It is found in the nucleus. The protein localises to the chromosome. In terms of biological role, transcription factor that binds to the sequence motif 5'-CATCCCATAATA-3', and is specifically required to silence expression of fetal hemoglobin in adult erythroid cells. Prevents expression of fetal hemoglobin genes HBG1 and HBG2 through CHD4: acts as a direct transcriptional activator of CHD4, a central component of the NuRD complex that represses transcription of fetal hemoglobin genes HBG1 and HBG2 in erythroid cells. May also activate transcription of matrix-remodeling genes such as MMP1 during fibroblast senescence. May activate transcription of the gap junction gene GJC1, perhaps in response to increasing glucose. However, recent studies suggest that ZNF410 is dedicated to regulate expression of a single gene: CHD4. The protein is Zinc finger protein 410 of Bos taurus (Bovine).